A 185-amino-acid polypeptide reads, in one-letter code: Elongation factor P (185 aa).

The protein belongs to the elongation factor P family.

Its subcellular location is the cytoplasm. Its pathway is protein biosynthesis; polypeptide chain elongation. Functionally, involved in peptide bond synthesis. Stimulates efficient translation and peptide-bond synthesis on native or reconstituted 70S ribosomes in vitro. Probably functions indirectly by altering the affinity of the ribosome for aminoacyl-tRNA, thus increasing their reactivity as acceptors for peptidyl transferase. This chain is Elongation factor P (efp), found in Nostoc sp. (strain PCC 7120 / SAG 25.82 / UTEX 2576).